The chain runs to 269 residues: Expansin-A32 (269 aa).

Positions 1-25 (MWCTWALGRVVLAVVFLVALAAGDA) are cleaved as a signal peptide. The Expansin-like EG45 domain maps to 60-174 (DGACGYKDTS…RRVPCVKVGG (115 aa)). In terms of domain architecture, Expansin-like CBD spans 184-264 (YFNLVMVSNV…DWQFGVTYQA (81 aa)).

It belongs to the expansin family. Expansin A subfamily.

It is found in the secreted. The protein resides in the cell wall. It localises to the membrane. May cause loosening and extension of plant cell walls by disrupting non-covalent bonding between cellulose microfibrils and matrix glucans. No enzymatic activity has been found. May be required for rapid internodal elongation in deepwater rice during submergence. The polypeptide is Expansin-A32 (EXPA32) (Oryza sativa subsp. japonica (Rice)).